The primary structure comprises 455 residues: Argininosuccinate lyase (455 aa).

The protein belongs to the lyase 1 family. Argininosuccinate lyase subfamily.

Its subcellular location is the cytoplasm. The catalysed reaction is 2-(N(omega)-L-arginino)succinate = fumarate + L-arginine. It participates in amino-acid biosynthesis; L-arginine biosynthesis; L-arginine from L-ornithine and carbamoyl phosphate: step 3/3. In Shewanella sp. (strain MR-7), this protein is Argininosuccinate lyase.